Consider the following 388-residue polypeptide: Succinate--CoA ligase [ADP-forming] subunit beta (388 aa).

Residues 9 to 244 (KEILRKYNVP…LDEEDPAEIE (236 aa)) enclose the ATP-grasp domain. ATP contacts are provided by residues K46, 53-55 (GRG), E99, A102, and E107. The Mg(2+) site is built by N199 and D213. Residues N264 and 321 to 323 (GIM) contribute to the substrate site.

Belongs to the succinate/malate CoA ligase beta subunit family. In terms of assembly, heterotetramer of two alpha and two beta subunits. The cofactor is Mg(2+).

The catalysed reaction is succinate + ATP + CoA = succinyl-CoA + ADP + phosphate. The enzyme catalyses GTP + succinate + CoA = succinyl-CoA + GDP + phosphate. Its pathway is carbohydrate metabolism; tricarboxylic acid cycle; succinate from succinyl-CoA (ligase route): step 1/1. Succinyl-CoA synthetase functions in the citric acid cycle (TCA), coupling the hydrolysis of succinyl-CoA to the synthesis of either ATP or GTP and thus represents the only step of substrate-level phosphorylation in the TCA. The beta subunit provides nucleotide specificity of the enzyme and binds the substrate succinate, while the binding sites for coenzyme A and phosphate are found in the alpha subunit. This is Succinate--CoA ligase [ADP-forming] subunit beta from Ralstonia pickettii (strain 12J).